The following is a 219-amino-acid chain: Type-5 uracil-DNA glycosylase (219 aa).

The [4Fe-4S] cluster site is built by Cys-13, Cys-16, Cys-115, and Cys-130.

Belongs to the uracil-DNA glycosylase (UDG) superfamily. Type 5 (UDGb) family.

DNA glycosylase with broad substrate specificity. Can remove uracil from double-stranded DNA containing either a U/G, U/A, U/C or U/T base pair. Can also excise hypoxanthine from double-stranded DNA containing G/I, T/I, and A/I base pairs, xanthine from both double-stranded and single stranded DNA, thymine from G/T mismatched DNA, 5'-hydroxymethyluracil and 5'-fluorouracil. In Thermus thermophilus (strain ATCC 27634 / DSM 579 / HB8), this protein is Type-5 uracil-DNA glycosylase.